We begin with the raw amino-acid sequence, 963 residues long: Adhesion G protein-coupled receptor D2 (963 aa).

The Extracellular portion of the chain corresponds to 1–662 (MDAPWGAGER…EEESLLRTLS (662 aa)). Residues 18–38 (DRSGVSLGPPPTPQVNQGTLG) are disordered. The 210-residue stretch at 116-325 (TTAVLVFDER…LPTVWVRLLC (210 aa)) folds into the Pentraxin (PTX) domain. The cysteines at positions 146 and 212 are disulfide-linked. N-linked (GlcNAc...) asparagine glycosylation is present at Asn-271. Residues 489–649 (MALVASVQRL…AILLQIYEVQ (161 aa)) form the GAIN-B domain. Residues 599-649 (PLFPPHPPSPYTGGAWATTGCSVAALYLDSTACFCNHSTSFAILLQIYEVQ) are GPS. Cys-619 and Cys-633 are oxidised to a cystine. An N-linked (GlcNAc...) asparagine glycan is attached at Asn-634. The chain crosses the membrane as a helical span at residues 663-683 (FVGCGVSFCALTTTFLLFLVA). The Cytoplasmic segment spans residues 684 to 691 (GVPKSERT). The helical transmembrane segment at 692 to 712 (TVHKNLTFSLASAEGFLMTSE) threads the bilayer. At 713–720 (WAKANEVA) the chain is on the extracellular side. Residues 721 to 741 (CVAVTVAMHFLFLVAFSWMLV) traverse the membrane as a helical segment. Residues 742 to 762 (EGLLLWRKVVAVSMHPGPGMR) are Cytoplasmic-facing. A helical membrane pass occupies residues 763–783 (LYHATGWGVPVGIVAVTLAML). Over 784–800 (PHDYVAPGHCWLNVHTN) the chain is Extracellular. The chain crosses the membrane as a helical span at residues 801–821 (AIWAFVGPVLFVLTANTCILA). The Cytoplasmic segment spans residues 822 to 857 (RVVMITVSSARRRARMLSPQPCLQQQIWTQIWATVK). Residues 858–878 (PVLVLLPVLGLTWLAGILVHL) traverse the membrane as a helical segment. Topologically, residues 879 to 880 (SP) are extracellular. The helical transmembrane segment at 881-901 (AWAYAAVGLNSIQGLYIFLVY) threads the bilayer. The Cytoplasmic portion of the chain corresponds to 902–963 (AACNEEVRSA…TPRHPLKAPA (62 aa)).

Belongs to the G-protein coupled receptor 2 family. Adhesion G-protein coupled receptor (ADGR) subfamily.

It is found in the membrane. Its function is as follows. Orphan receptor. The sequence is that of Adhesion G protein-coupled receptor D2 (ADGRD2) from Homo sapiens (Human).